Here is a 367-residue protein sequence, read N- to C-terminus: tRNA/tmRNA (uracil-C(5))-methyltransferase (367 aa).

Q190, Y218, N223, E239, and D299 together coordinate S-adenosyl-L-methionine. C324 functions as the Nucleophile in the catalytic mechanism. Catalysis depends on E358, which acts as the Proton acceptor.

The protein belongs to the class I-like SAM-binding methyltransferase superfamily. RNA M5U methyltransferase family. TrmA subfamily.

The catalysed reaction is uridine(54) in tRNA + S-adenosyl-L-methionine = 5-methyluridine(54) in tRNA + S-adenosyl-L-homocysteine + H(+). It catalyses the reaction uridine(341) in tmRNA + S-adenosyl-L-methionine = 5-methyluridine(341) in tmRNA + S-adenosyl-L-homocysteine + H(+). Dual-specificity methyltransferase that catalyzes the formation of 5-methyluridine at position 54 (m5U54) in all tRNAs, and that of position 341 (m5U341) in tmRNA (transfer-mRNA). The chain is tRNA/tmRNA (uracil-C(5))-methyltransferase from Erwinia tasmaniensis (strain DSM 17950 / CFBP 7177 / CIP 109463 / NCPPB 4357 / Et1/99).